The chain runs to 375 residues: POU domain, class 3, transcription factor 1-A (375 aa).

Disordered regions lie at residues 1–29 (MAAT…RMHQ), 67–138 (PASD…HQPL), and 151–200 (MLGP…PSSD). Composition is skewed to polar residues over residues 107-117 (VHQQSPSSHAW), 129-138 (SPSSNSHQPL), and 151-160 (MLGPQASSLH). Positions 162–177 (SMRDPLHDDPGVHDTQ) are enriched in basic and acidic residues. Residues 194–268 (EDAPSSDDLE…LLNKWLEETD (75 aa)) form the POU-specific domain. Residues 286–345 (KRKKRTSIEVGVKGALENHFLKCPKPSAHEITSLADSLQLEKEVVRVWFCNRRQKEKRMT) constitute a DNA-binding region (homeobox).

This sequence belongs to the POU transcription factor family. Class-3 subfamily. In embryos at the neural fold stage, localized primarily in the anterior neural plate, and localized mostly in the anterior region of the nerve cord of neurula stage embryos. In tailbud stages, expressed predominantly in the eye and brain, with weak expression along the length of the nerve cord. In adults, expressed in skin and brain.

It localises to the nucleus. Its function is as follows. Acts as a transcription factor. May play a role in neuronal differentiation. The protein is POU domain, class 3, transcription factor 1-A (pou3f1-a) of Xenopus laevis (African clawed frog).